We begin with the raw amino-acid sequence, 105 residues long: D-galactoside-specific lectin (105 aa).

Residues 13 to 103 form the SUEL-type lectin domain; that stretch reads VCEDSSLTIS…KYLAVTYICS (91 aa).

In terms of assembly, homodimer; disulfide-linked.

The protein localises to the cytoplasm. Its function is as follows. This protein binds D-galactoside. May have an important role in the activation of eggs (triggered by fertilization), or in their subsequent differentiation. The dimeric form is essential for hemagglutination activity. This Heliocidaris crassispina (Sea urchin) protein is D-galactoside-specific lectin.